A 321-amino-acid polypeptide reads, in one-letter code: Phospholipid phosphatase-related protein type 5 (321 aa).

6 helical membrane-spanning segments follow: residues 6–26 (VALI…TVML), 62–82 (AVPP…VIIV), 122–142 (FLGI…AGQV), 196–213 (AALS…ITST), 225–245 (VLCL…VAEY), and 252–272 (VIAG…CVVN).

Belongs to the PA-phosphatase related phosphoesterase family.

It is found in the cell membrane. In terms of biological role, induces filopodia formation and promotes neurite growth in a CDC42-independent manner; impedes neurite growth inhibitory-mediated axonal retraction. This is Phospholipid phosphatase-related protein type 5 from Mus musculus (Mouse).